The following is an 87-amino-acid chain: U3-theraphotoxin-Hhn1h (87 aa).

A signal peptide spans 1–24 (MVNMKASMFLTFAGLVLLFVVCYA). The propeptide occupies 25-52 (SESEEKEFPKEMLSSIFAVDNDSKQEER). Cystine bridges form between cysteine 54–cysteine 67, cysteine 61–cysteine 72, and cysteine 66–cysteine 79.

This sequence belongs to the neurotoxin 10 (Hwtx-1) family. 51 (Hntx-8) subfamily. Hntx-8 sub-subfamily. Expressed by the venom gland.

It is found in the secreted. Its function is as follows. Ion channel inhibitor. The protein is U3-theraphotoxin-Hhn1h of Cyriopagopus hainanus (Chinese bird spider).